Here is a 422-residue protein sequence, read N- to C-terminus: Probable tRNA pseudouridine synthase D (422 aa).

D83 acts as the Nucleophile in catalysis. One can recognise a TRUD domain in the interval 164–386 (GFPNYFGSQR…AGGRRELLIK (223 aa)).

The protein belongs to the pseudouridine synthase TruD family.

The enzyme catalyses uridine(13) in tRNA = pseudouridine(13) in tRNA. Functionally, could be responsible for synthesis of pseudouridine from uracil-13 in transfer RNAs. The sequence is that of Probable tRNA pseudouridine synthase D from Thermococcus sibiricus (strain DSM 12597 / MM 739).